Reading from the N-terminus, the 603-residue chain is MTDVPAVRIRNFCIIAHIDHGKSTLADRLLQATGTVDERQMKEQFLDNMDLERERGITIKLQAARMNYQAKDGQQYVLNLIDTPGHVDFSYEVSRSLAACEGALLVVDASQGVEAQTLANVYLALEHNLEIIPVLNKIDLPGAEPDRVIGEIEEIIGLDCSGAILASAKEGIGISEILEAVVERIPPPPNTVDQRLRALIFDSYYDIYRGVIVYFRVMDGTVKKGDRVYLMASEKEYEIDELGVLSPTQKPVDELHAGEVGYFGAAIKAVADARVGDTITLCNAKAAEALPGYTEANPMVFCGMFPIDADQFEDLREALEKLRLNDAALQYEPETSSAMGFGFRCGFLGLLHMEIVQERLEREYDLDLIITAPSVVYKVITTKGEELYIDNPSHLPAPNDRERIEEPYVKVEMITPETYVGTLMELSQNRRGIFKDMKYLTQGRTTLTYEIPLAEVVTDFFDQMKSRSRGYASMEYHLIGYRENPLVKLDIMINGDPVDSLAMIVHRDKAYGVGRSMAEKLKELIPRHQFKVPIQASIGSKVIASEHIPALRKDVLAKCYGGDISRKKKLLQKQAKGKKRMKSVGTVDVPQEAFMAVLRLDQS.

One can recognise a tr-type G domain in the interval 7 to 189 (VRIRNFCIIA…AVVERIPPPP (183 aa)). Residues 19-24 (DHGKST) and 136-139 (NKID) each bind GTP.

It belongs to the TRAFAC class translation factor GTPase superfamily. Classic translation factor GTPase family. LepA subfamily.

The protein resides in the cell inner membrane. It catalyses the reaction GTP + H2O = GDP + phosphate + H(+). Its function is as follows. Required for accurate and efficient protein synthesis under certain stress conditions. May act as a fidelity factor of the translation reaction, by catalyzing a one-codon backward translocation of tRNAs on improperly translocated ribosomes. Back-translocation proceeds from a post-translocation (POST) complex to a pre-translocation (PRE) complex, thus giving elongation factor G a second chance to translocate the tRNAs correctly. Binds to ribosomes in a GTP-dependent manner. This Trichormus variabilis (strain ATCC 29413 / PCC 7937) (Anabaena variabilis) protein is Elongation factor 4.